The following is a 246-amino-acid chain: V-type proton ATPase subunit D 1 (246 aa).

This sequence belongs to the V-ATPase D subunit family. In terms of assembly, V-ATPase is a heteromultimeric enzyme made up of two complexes: the ATP-hydrolytic V1 complex and the proton translocation V0 complex. The V1 complex consists of three catalytic AB heterodimers that form a heterohexamer, three peripheral stalks each consisting of EG heterodimers, one central rotor including subunits D and F, and the regulatory subunits C and H. The proton translocation complex V0 consists of the proton transport subunit a, a ring of proteolipid subunits c9c'', rotary subunit d, subunits e and f, and the accessory subunits VhaAC45 and ATP6AP2.

Subunit of the V1 complex of vacuolar(H+)-ATPase (V-ATPase), a multisubunit enzyme composed of a peripheral complex (V1) that hydrolyzes ATP and a membrane integral complex (V0) that translocates protons. V-ATPase is responsible for acidifying and maintaining the pH of intracellular compartments and in some cell types, is targeted to the plasma membrane, where it is responsible for acidifying the extracellular environment. The chain is V-type proton ATPase subunit D 1 (Vha36-1) from Drosophila melanogaster (Fruit fly).